The primary structure comprises 509 residues: Cytochrome P450 4A10 (509 aa).

A run of 2 helical transmembrane segments spans residues 15–35 (LSGFLQVASVLGLLLLLVKAV) and 121–141 (LLAPWIGYGLLLLNGQPWFQH). Heme is bound at residue Glu-320. Ser-439 carries the phosphoserine modification. Cys-456 provides a ligand contact to heme.

Belongs to the cytochrome P450 family. Requires heme as cofactor. In terms of tissue distribution, highly expressed in the kidneys of both genders.

It localises to the endoplasmic reticulum membrane. The protein localises to the microsome membrane. The enzyme catalyses an omega-methyl-long-chain fatty acid + reduced [NADPH--hemoprotein reductase] + O2 = an omega-hydroxy-long-chain fatty acid + oxidized [NADPH--hemoprotein reductase] + H2O + H(+). The catalysed reaction is dodecanoate + reduced [NADPH--hemoprotein reductase] + O2 = 12-hydroxydodecanoate + oxidized [NADPH--hemoprotein reductase] + H2O + H(+). It carries out the reaction dodecanoate + reduced [NADPH--hemoprotein reductase] + O2 = 11-hydroxydodecanoate + oxidized [NADPH--hemoprotein reductase] + H2O + H(+). It catalyses the reaction tetradecanoate + reduced [NADPH--hemoprotein reductase] + O2 = 14-hydroxytetradecanoate + oxidized [NADPH--hemoprotein reductase] + H2O + H(+). The enzyme catalyses hexadecanoate + reduced [NADPH--hemoprotein reductase] + O2 = 16-hydroxyhexadecanoate + oxidized [NADPH--hemoprotein reductase] + H2O + H(+). The catalysed reaction is (9Z)-octadecenoate + reduced [NADPH--hemoprotein reductase] + O2 = 18-hydroxy-(9Z)-octadecenoate + oxidized [NADPH--hemoprotein reductase] + H2O + H(+). It carries out the reaction (9Z,12Z)-octadecadienoate + reduced [NADPH--hemoprotein reductase] + O2 = 18-hydroxy-(9Z,12Z)-octadecadienoate + oxidized [NADPH--hemoprotein reductase] + H2O + H(+). It catalyses the reaction (9Z,12Z)-octadecadienoate + reduced [NADPH--hemoprotein reductase] + O2 = 17-hydroxy-(9Z,12Z)-octadecadienoate + oxidized [NADPH--hemoprotein reductase] + H2O + H(+). The enzyme catalyses (5Z,8Z,11Z,14Z)-eicosatetraenoate + reduced [NADPH--hemoprotein reductase] + O2 = 20-hydroxy-(5Z,8Z,11Z,14Z)-eicosatetraenoate + oxidized [NADPH--hemoprotein reductase] + H2O + H(+). The catalysed reaction is 8,9-epoxy-(5Z,11Z,14Z)-eicosatrienoate + reduced [NADPH--hemoprotein reductase] + O2 = 20-hydroxy-8,9-epoxy-(5Z,11Z,14Z)-eicosatrienoate + oxidized [NADPH--hemoprotein reductase] + H2O + H(+). In terms of biological role, a cytochrome P450 monooxygenase involved in the metabolism of fatty acids. Catalyzes predominantly the oxidation of the terminal carbon (omega-oxidation) of long-chain fatty acids. Acts as a major omega-hydroxylase for dodecanoic (lauric) acid in liver. In kidney, may play an important role in omega-hydroxylation of (5Z,8Z,11Z,14Z)-eicosatetraenoic acid (arachidonate) to 20-hydroxyeicosatetraenoic acid (20-HETE), a signaling molecule acting both as vasoconstrictive and natriuretic with overall effect on arterial blood pressure. Also participates in the formation of anti-inflammatory hydroxyepoxyeicosatrienoic acids (HEETs) in kidney by converting 8,9-epoxyeicosatrienoic acid (EET) to 20,8,9-HEET, an activator of PPARA. Displays substantially lower fatty acid omega-1 hydroxylase activity. Mechanistically, uses molecular oxygen inserting one oxygen atom into a substrate, and reducing the second into a water molecule, with two electrons provided by NADPH via cytochrome P450 reductase (CPR; NADPH-ferrihemoprotein reductase). The protein is Cytochrome P450 4A10 of Mus musculus (Mouse).